A 296-amino-acid chain; its full sequence is (3R)-3-[(carboxymethyl)amino]fatty acid oxygenase/decarboxylase (296 aa).

Positions 66, 71, and 98 each coordinate (3R)-3-[(carboxymethyl)amino]butanoate. 3 residues coordinate (3R)-3-{[carboxy(hydroxy)methyl]amino}butanoate: Y66, Y71, and G98. Residues H102 and D104 each contribute to the Fe(2+) site. (3R)-3-[(carboxymethyl)amino]butanoate is bound by residues Y105 and K163. Positions 105 and 163 each coordinate (3R)-3-{[carboxy(hydroxy)methyl]amino}butanoate. A Fe(2+)-binding site is contributed by H265. H269 contacts 2-oxoglutarate. R280 provides a ligand contact to (3R)-3-[(carboxymethyl)amino]butanoate. Residue R280 coordinates (3R)-3-{[carboxy(hydroxy)methyl]amino}butanoate.

The protein belongs to the TfdA dioxygenase family. Requires Fe(2+) as cofactor.

It catalyses the reaction a (3R)-3-[(carboxymethyl)amino]fatty acid + 2 2-oxoglutarate + 2 O2 = a (3R)-3-isocyanyl-fatty acid + 2 succinate + 3 CO2 + 2 H2O. The enzyme catalyses a (3R)-3-[(carboxymethyl)amino]fatty acid + 2-oxoglutarate + O2 = a (3R)-3-{[carboxy(hydroxy)methyl]amino}fatty acid + succinate + CO2. It carries out the reaction a (3R)-3-{[carboxy(hydroxy)methyl]amino}fatty acid + 2-oxoglutarate + O2 = a (3R)-3-isocyanyl-fatty acid + succinate + 2 CO2 + 2 H2O. The catalysed reaction is (3R)-3-[(carboxymethyl)amino]butanoate + 2 2-oxoglutarate + 2 O2 = (3R)-3-isocyanylbutanoate + 2 succinate + 3 CO2 + 2 H2O. It catalyses the reaction (3R)-3-[(carboxymethyl)amino]butanoate + 2-oxoglutarate + O2 = (3R)-3-{[carboxy(hydroxy)methyl]amino}butanoate + succinate + CO2. The enzyme catalyses (3R)-3-{[carboxy(hydroxy)methyl]amino}butanoate + 2-oxoglutarate + O2 = (3R)-3-isocyanylbutanoate + succinate + 2 CO2 + 2 H2O. Functionally, involved in the biosynthesis of a unique class of isonitrile lipopeptides (INLPs). Catalyzes the conversion of (3R)-3-[(carboxymethyl)amino]fatty acids such as (3R)-3-[(carboxymethyl)amino]butanoate (CABA) to (3R)-3-isocyanylbutanoate (INBA) through an oxidative decarboxylation mechanism, thereby generating the isonitrile group of INLPs. The polypeptide is (3R)-3-[(carboxymethyl)amino]fatty acid oxygenase/decarboxylase (Streptomyces coeruleorubidus).